Reading from the N-terminus, the 2194-residue chain is PDZ and LIM domain protein Zasp (2194 aa).

The PDZ domain occupies 8 to 90 (QIKLSRFDAQ…NFVITVQRGG (83 aa)). Positions 211–277 (TGQSTPAFGN…KPPSTGGLPT (67 aa)) are disordered. The segment covering 228–253 (PQQLQQPQQQYNQHQQHYHQQQQQQQ) has biased composition (low complexity). The region spanning 280–339 (NICTECERLITGVFVRIKDKNLHVECFKCATCGTSLKNQGYYNFNNKLYCDIHAKQAAIN) is the LIM zinc-binding 1 domain. Positions 415–435 (AATPQAATATDSPAATASSSD) are enriched in low complexity. Disordered stretches follow at residues 415–436 (AATP…SSDN), 457–476 (VALA…DQPF), 511–558 (GAAA…AVEE), 580–611 (SRQS…YIPP), 623–692 (VQQV…TTSE), 896–940 (AAAA…PRGS), 1223–1260 (LTQK…QRTQ), 1297–1322 (QSQS…PPAN), 1550–1632 (LNAS…QQPE), 1646–1738 (QREQ…YGKT), and 1815–1837 (APPP…SGYQ). The segment covering 515–530 (PKSPVSYPPQQQQQSP) has biased composition (low complexity). Polar residues-rich tracts occupy residues 580–590 (SRQSQRGSSFT) and 644–667 (VGTS…TASA). A compositionally biased stretch (low complexity) spans 676–692 (SSDSYTSTSTTTTTTSE). Residues 1598-1610 (QTGSITTGQSYQG) show a composition bias toward polar residues. Low complexity-rich tracts occupy residues 1616-1630 (SEQS…YNQQ), 1646-1668 (QREQ…TRSQ), and 1699-1727 (SQSV…QNQS). LIM zinc-binding domains lie at 2018-2078 (PLCN…KYLA), 2079-2138 (PTCS…LFTT), and 2139-2194 (KCFA…NHAR).

Interacts with alpha-actinin (Actn). In terms of tissue distribution, expression is first detected in the proctodeum and the midgut primordium. In stage 11 embryos, expression is predominant in the leading edge of epidermal cells adjacent to the amnioserosa. Stage 12 embryos exhibit expression in the midgut and the leading edge. Expressed in several rows of germ band cells next to the leading edge at stage 14. Strong expression is visible in the midgut and pharyngeal muscles of stage 17 embryos. Also expressed in somatic muscles and visceral mesoderm. Colocalizes with mys (beta PS integrin) in myotendinous junctions and with Actn in muscle Z lines.

It localises to the cytoplasm. Its subcellular location is the cytoskeleton. Functionally, regulator of cell matrix adhesion having two related functions, one upstream of Actn organizing the Z line and the other downstream of integrins regulating assembly of integrin adhesion sites. Also required for the formation of myotendinous junctions in muscles. This is PDZ and LIM domain protein Zasp (Zasp52) from Drosophila melanogaster (Fruit fly).